The primary structure comprises 206 residues: MKHNNVIPSSHFRKHWQNYVKTWFNQPARKTRRRVARQKKAVKIFPRPTSGPLRPVVHGQTLKYNMKVRAGKGFTLEELKVAGIPKKLAPTIGISVDHRRKNRSLEGLQSNVQRLKTYKAKLVVFPRRSRQVKAGDSTPEELANATQVQGDYMPIASVKAAMELVKLTADLKAFKAYDKIRLERTNARHAGARAKRAAEAEKEEKK.

The segment at 186 to 206 (NARHAGARAKRAAEAEKEEKK) is disordered. The segment covering 196 to 206 (RAAEAEKEEKK) has biased composition (basic and acidic residues).

Belongs to the eukaryotic ribosomal protein eL13 family.

The sequence is that of Large ribosomal subunit protein eL13x (RPL13D) from Arabidopsis thaliana (Mouse-ear cress).